Consider the following 521-residue polypeptide: Cytochrome P450 monooxygenase ARMGADRAFT_1018420 (521 aa).

A helical membrane pass occupies residues 9–26 (VSPIWILTAIVVVAYTTV). C443 provides a ligand contact to heme. A glycan (N-linked (GlcNAc...) asparagine) is linked at N450.

It belongs to the cytochrome P450 family. It depends on heme as a cofactor.

The protein localises to the membrane. The protein operates within secondary metabolite biosynthesis. In terms of biological role, cytochrome P450 monooxygenase, part of the gene cluster that mediates the biosynthesis of melleolides, a range of antifungal and phytotoxic polyketide derivatives composed of an orsellinic acid (OA) moiety esterified to various sesquiterpene alcohols. The first step in melleolides biosynthesis is performed by the delta(6)-protoilludene synthase PRO1 which catalyzes the cyclization of farnesyl diphosphate to protoilludene. The orsellinic acid synthase armB produces OA by condensing acetyl-CoA with 3 malonyl-CoA units in a three-round chain elongation reaction folowed by a C2-C7 ring closure. ArmB further catalyzes the trans-esterification of OA to the various sesquiterpene alcohols resulting from the hydroxylation of protoilludene. The melleolides cluster also includes 5 cytochrome P450 monooxygenases, 4 NAD(+)-dependent oxidoreductases, one flavin-dependent oxidoreductase, and one O-methyltransferase. The cytochrome P450 monooxygenases may be involved in protoilludene hydroxylation to elaborate melleolides with multiple alcohol groups, such as melleolide D, which carries alcohol functionalities at C-4, C-5, C-10, and C-13. The role of the NAD(+)-dependent enzymes remains unknown. Numerous melleolides, including arnamial, show 5'-O-methylation of the aromatic moiety which may be catalyzed by the methyltransferase encoded in the cluster. The flavin-dependent oxidoreductase might represent the dehydrogenase yielding the aldehyde in position 1 of arnamial and other melleolides. Finally, several halogenase localized outside of the cluster, are able to catalyze the transfer of a single chlorine atom to the melleolide backbone, resulting in a 6'-chloromelleolide product. This is Cytochrome P450 monooxygenase ARMGADRAFT_1018420 from Armillaria gallica (Bulbous honey fungus).